The primary structure comprises 292 residues: G1/S-specific cyclin-D3 (292 aa).

A Cyclin N-terminal domain is found at 27–152; the sequence is VLQSLLRLEE…LVLGKLKWDL (126 aa). Residues 256 to 292 are disordered; the sequence is REAAQTAPSPVPKAPRGSSSQGPSQTSTPTDVTAIHL. Phosphoserine occurs at positions 264 and 279. Low complexity predominate over residues 272 to 285; sequence GSSSQGPSQTSTPT. Residue threonine 283 is modified to Phosphothreonine.

The protein belongs to the cyclin family. Cyclin D subfamily. As to quaternary structure, interacts with the CDK4 and CDK6 protein kinases to form a serine/threonine kinase holoenzyme complex. The cyclin subunit imparts substrate specificity to the complex. Interacts with ATF5. Interacts with EIF3K. Component of the ternary complex cyclin D/CDK4/CDKN1B required for nuclear translocation and modulation of CDK4-mediated kinase activity. Can form similar complexes with either CDKN1A or CDKN2A. Phosphorylation at Thr-283 by MAP kinases is required for ubiquitination and degradation by the DCX(AMBRA1) complex. In terms of processing, ubiquitinated by the DCX(AMBRA1) complex during the transition from G1 to S cell phase, leading to its degradation: ubiquitination is dependent on Thr-283 phosphorylation. The DCX(AMBRA1) complex represents the major regulator of CCND3 stability during the G1/S transition. Polyubiquitinated by the SCF(FBXL2) complex, leading to proteasomal degradation.

Its subcellular location is the nucleus. It is found in the cytoplasm. Its function is as follows. Regulatory component of the cyclin D3-CDK4 (DC) complex that phosphorylates and inhibits members of the retinoblastoma (RB) protein family including RB1 and regulates the cell-cycle during G(1)/S transition. Phosphorylation of RB1 allows dissociation of the transcription factor E2F from the RB/E2F complex and the subsequent transcription of E2F target genes which are responsible for the progression through the G(1) phase. Hypophosphorylates RB1 in early G(1) phase. Cyclin D-CDK4 complexes are major integrators of various mitogenenic and antimitogenic signals. Component of the ternary complex, cyclin D3/CDK4/CDKN1B, required for nuclear translocation and activity of the cyclin D-CDK4 complex. Shows transcriptional coactivator activity with ATF5 independently of CDK4. In Mus musculus (Mouse), this protein is G1/S-specific cyclin-D3.